The following is a 56-amino-acid chain: Large ribosomal subunit protein bL33 (56 aa).

Residues 1–12 show a composition bias toward basic and acidic residues; the sequence is MASKGGRDKIKL. The segment at 1 to 28 is disordered; the sequence is MASKGGRDKIKLESTAGTGHFYTTTKNK. The span at 15–25 shows a compositional bias: polar residues; the sequence is TAGTGHFYTTT.

The protein belongs to the bacterial ribosomal protein bL33 family.

In Cupriavidus necator (strain ATCC 17699 / DSM 428 / KCTC 22496 / NCIMB 10442 / H16 / Stanier 337) (Ralstonia eutropha), this protein is Large ribosomal subunit protein bL33.